Consider the following 103-residue polypeptide: uncharacterized protein (103 aa).

Positions 1–22 (MFRPFLNSLMLGSLFFPFIAIA) are cleaved as a signal peptide.

It to the N-terminal of the FimA/PapA family of fimbria proteins.

This is an uncharacterized protein from Escherichia coli (strain K12).